We begin with the raw amino-acid sequence, 172 residues long: Ribosome maturation factor RimM (172 aa).

The PRC barrel domain occupies 96-170 (EENEFYFHEI…KITIEVMEGL (75 aa)).

It belongs to the RimM family. As to quaternary structure, binds ribosomal protein uS19.

It is found in the cytoplasm. An accessory protein needed during the final step in the assembly of 30S ribosomal subunit, possibly for assembly of the head region. Essential for efficient processing of 16S rRNA. May be needed both before and after RbfA during the maturation of 16S rRNA. It has affinity for free ribosomal 30S subunits but not for 70S ribosomes. The polypeptide is Ribosome maturation factor RimM (Listeria monocytogenes serotype 4b (strain CLIP80459)).